We begin with the raw amino-acid sequence, 346 residues long: UDP-3-O-acylglucosamine N-acyltransferase (346 aa).

Catalysis depends on H253, which acts as the Proton acceptor.

Belongs to the transferase hexapeptide repeat family. LpxD subfamily. In terms of assembly, homotrimer.

The enzyme catalyses a UDP-3-O-[(3R)-3-hydroxyacyl]-alpha-D-glucosamine + a (3R)-hydroxyacyl-[ACP] = a UDP-2-N,3-O-bis[(3R)-3-hydroxyacyl]-alpha-D-glucosamine + holo-[ACP] + H(+). It participates in bacterial outer membrane biogenesis; LPS lipid A biosynthesis. Catalyzes the N-acylation of UDP-3-O-acylglucosamine using 3-hydroxyacyl-ACP as the acyl donor. Is involved in the biosynthesis of lipid A, a phosphorylated glycolipid that anchors the lipopolysaccharide to the outer membrane of the cell. The polypeptide is UDP-3-O-acylglucosamine N-acyltransferase (Rickettsia peacockii (strain Rustic)).